The sequence spans 306 residues: Flavin adenine dinucleotide synthase (306 aa).

Residues Ser-59, Ile-107, Gly-164, 182 to 185, Arg-190, and Arg-300 contribute to the FAD site; that span reads DSNW.

This sequence belongs to the PAPS reductase family. FAD1 subfamily.

The protein resides in the cytoplasm. It catalyses the reaction FMN + ATP + H(+) = FAD + diphosphate. Its pathway is cofactor biosynthesis; FAD biosynthesis; FAD from FMN: step 1/1. Catalyzes the adenylation of flavin mononucleotide (FMN) to form flavin adenine dinucleotide (FAD) coenzyme. In Saccharomyces cerevisiae (strain ATCC 204508 / S288c) (Baker's yeast), this protein is Flavin adenine dinucleotide synthase.